Reading from the N-terminus, the 241-residue chain is Beta-nerve growth factor (241 aa).

The N-terminal stretch at 1–18 (MSMLFYTLITALLIGIQA) is a signal peptide. A propeptide spanning residues 19–121 (APHTESNVPA…SFNRTHRSKR (103 aa)) is cleaved from the precursor. 3 disulfide bridges follow: Cys136/Cys201, Cys179/Cys229, and Cys189/Cys231. N-linked (GlcNAc...) asparagine glycosylation occurs at Asn166. Tyr173 and Lys209 together coordinate a 1-acyl-sn-glycero-3-phospho-(1D-myo-inositol). Lys209 is an a 1-acyl-sn-glycero-3-phospho-L-serine binding site.

Belongs to the NGF-beta family. In terms of assembly, homodimer. The homodimer interacts with a single NTRK1 chain. The homodimer interacts with a single NGFR chain. The NGF dimer interacts with a single SORCS2 chain (via extracellular domain). The NGF precursor (proNGF) binds to a receptor complex formed by SORT1 and NGFR, which leads to NGF endocytosis. Both mature NGF and the immature NGF precursor (proNGF) interact with SORCS2 and with the heterodimer formed by SORCS2 and NGFR (via extracellular domains). The NGF precursor (proNGF) has much higher affinity for SORCS2 than mature NGF. The NGF precursor (proNGF) has much higher affinity for SORT1 than mature NGF. Interacts with ADAM10 in a divalent cation-dependent manner. Interacts with SORCS3.

Its subcellular location is the secreted. It localises to the endosome lumen. Its function is as follows. Nerve growth factor is important for the development and maintenance of the sympathetic and sensory nervous systems. Extracellular ligand for the NTRK1 and NGFR receptors, activates cellular signaling cascades to regulate neuronal proliferation, differentiation and survival. The immature NGF precursor (proNGF) functions as a ligand for the heterodimeric receptor formed by SORCS2 and NGFR, and activates cellular signaling cascades that lead to inactivation of RAC1 and/or RAC2, reorganization of the actin cytoskeleton and neuronal growth cone collapse. In contrast to mature NGF, the precursor form (proNGF) promotes neuronal apoptosis (in vitro). Inhibits metalloproteinase-dependent proteolysis of platelet glycoprotein VI. Binds lysophosphatidylinositol and lysophosphatidylserine between the two chains of the homodimer. The lipid-bound form promotes histamine relase from mast cells, contrary to the lipid-free form. This chain is Beta-nerve growth factor (NGF), found in Bos taurus (Bovine).